Consider the following 396-residue polypeptide: S-adenosylmethionine synthase (396 aa).

ATP is bound at residue histidine 15. Residue aspartate 17 coordinates Mg(2+). Glutamate 43 provides a ligand contact to K(+). Residues glutamate 56 and glutamine 99 each contribute to the L-methionine site. Residues 99–109 (QSADIALGVDR) form a flexible loop region. ATP is bound by residues 175–177 (DGK), 241–242 (RF), aspartate 250, 256–257 (RK), alanine 273, and lysine 277. Aspartate 250 serves as a coordination point for L-methionine. Residue lysine 281 participates in L-methionine binding.

Belongs to the AdoMet synthase family. As to quaternary structure, homotetramer; dimer of dimers. Requires Mg(2+) as cofactor. K(+) serves as cofactor.

It localises to the cytoplasm. It carries out the reaction L-methionine + ATP + H2O = S-adenosyl-L-methionine + phosphate + diphosphate. Its pathway is amino-acid biosynthesis; S-adenosyl-L-methionine biosynthesis; S-adenosyl-L-methionine from L-methionine: step 1/1. Its function is as follows. Catalyzes the formation of S-adenosylmethionine (AdoMet) from methionine and ATP. The overall synthetic reaction is composed of two sequential steps, AdoMet formation and the subsequent tripolyphosphate hydrolysis which occurs prior to release of AdoMet from the enzyme. The sequence is that of S-adenosylmethionine synthase from Desulfitobacterium hafniense (strain DSM 10664 / DCB-2).